The sequence spans 226 residues: MAAPAPVTRQVSGAAALVPAPSGPDSGQPLAAAVAELPVLDARGQRVPFGALFRERRAVVVFVRHFLCYICKEYVEDLAKIPRSFLQEANVTLIVIGQSSYHHIEPFCKLTGYSHEIYVDPEREIYKRLGMKRGEEIASSGQSPHIKSNLLSGSLQSLWRAVTGPLFDFQGDPAQQGGTLILGPGNNIHFIHRDRNRLDHKPINSVLQLVGVQHVNFTNRPSVIHV.

Belongs to the peroxiredoxin-like PRXL2 family. PRXL2C subfamily. As to expression, expressed in gastric tissues.

May positively regulate ERK1/2 signaling and AKT1 activation leading to HIF1A up-regulation with an increased expression of glycolysis genes and enhanced glycolysis. The protein is Peroxiredoxin-like 2C of Homo sapiens (Human).